An 827-amino-acid chain; its full sequence is Periplasmic nitrate reductase (827 aa).

The segment at residues 1–32 (MELSRRDFMKANAAVAAAAAAGIVLPVKNVQA) is a signal peptide (tat-type signal). The region spanning 37 to 93 (IKWDKAPCRFCGTGCSVLVGTKDGRVVATQGDPDAEVNRGLNCIKGYFLSKIMYGAD) is the 4Fe-4S Mo/W bis-MGD-type domain. The [4Fe-4S] cluster site is built by cysteine 44, cysteine 47, cysteine 51, and cysteine 79. Mo-bis(molybdopterin guanine dinucleotide)-binding positions include lysine 81, glutamine 148, asparagine 173, cysteine 177, 210–217 (WGSNMAEM), 241–245 (STFEH), methionine 371, glutamine 375, asparagine 481, 507–508 (SD), lysine 530, aspartate 557, and 717–726 (TGRVLEHWHT). Phenylalanine 793 lines the substrate pocket. The Mo-bis(molybdopterin guanine dinucleotide) site is built by asparagine 801 and lysine 818.

This sequence belongs to the prokaryotic molybdopterin-containing oxidoreductase family. NasA/NapA/NarB subfamily. Component of the periplasmic nitrate reductase NapAB complex composed of NapA and NapB. It depends on [4Fe-4S] cluster as a cofactor. Mo-bis(molybdopterin guanine dinucleotide) serves as cofactor. In terms of processing, predicted to be exported by the Tat system. The position of the signal peptide cleavage has not been experimentally proven.

Its subcellular location is the periplasm. It carries out the reaction 2 Fe(II)-[cytochrome] + nitrate + 2 H(+) = 2 Fe(III)-[cytochrome] + nitrite + H2O. Functionally, catalytic subunit of the periplasmic nitrate reductase complex NapAB. Receives electrons from NapB and catalyzes the reduction of nitrate to nitrite. The sequence is that of Periplasmic nitrate reductase from Haemophilus ducreyi (strain 35000HP / ATCC 700724).